A 208-amino-acid polypeptide reads, in one-letter code: Cytochrome c oxidase assembly protein CtaG (208 aa).

The Cytoplasmic portion of the chain corresponds to 1-19 (MSPPLPQAPQQPAPRRGLG). The chain crosses the membrane as a helical; Signal-anchor for type II membrane protein span at residues 20–42 (HDTAVAAVCGLVVALMVGASFAA). Residues 43 to 208 (VPFYNWFCRT…SEPAPRKGNL (166 aa)) are Periplasmic-facing.

It belongs to the COX11/CtaG family.

The protein localises to the cell inner membrane. In terms of biological role, exerts its effect at some terminal stage of cytochrome c oxidase synthesis, probably by being involved in the insertion of the copper B into subunit I. In Rhodopseudomonas palustris (strain TIE-1), this protein is Cytochrome c oxidase assembly protein CtaG.